Reading from the N-terminus, the 1641-residue chain is MWYLAFLLIIGAYAADHAWETGNEYHYLIESRTLTVLDKLSQQFSGIVIKGGLTIQVKSPDTLQAVVSKTQYAPVHKTLENWNDEIADLKFDELSMSGKSFEIKLKHGVIRDVLIDQDVLTWEVNLIKSIVSQLQVDLQGENVIASSDNQIPDDSQPFGVYKAMEDSVGGKCEVLYSITPVPENFDSIPFPNLRKDGLNFFVTKTKNYNKCEQQMAYHSGITDKMNWKLGSNDGVLSRSSTSSIIISGNVKHFTIQSSLTTSEIFVRSKLHDTYSSAVYDSVKLTLDRMNQISNPMSASNNLVSTGNLVYIYNNPFSNQRKLRQPSVSLNSMEARSSENSNEENRSDDDRSNFLSNSGEEREYLQSKPTLNEAPESPLLPYFIGYKGESIQKSEDITSVAARFIAQIAWNLETSPVNAFNFSPSTEYIEPCIILIRLIRTMNVEQIAELENKLSDPIYHLQGNKLPTEYKKSYDKTTWDIFFNAVVSAGTGPALISIKNMIKNGQLKDTQAAMIISKIPKTALTPTSEYVNKFFELITDEQVTKQRFLNTSALLAFAELVRYTQSNRSIHYPVHSFGHMVSKQDNALLETYIPYMANQLTEAIKDGDSRRIQTYIMALGNFGHPKVLSVFEPYLEGTLPASTFQRLMMVVSLNRLSENFPRLARSVAFKIYMNIMEAYELRCAAVYVVMKTNPPLVMLQRMAEFTNQDQDRHVNSVIKTNIDALANLEQPEFQDLAAKARIARELLNPHIDTESYSQGFLFKKIIPSLNMAEITILQIIGSQDTTVPKSSYLNIYQSYGGFNLPPSRMSYEISSFRALLDMWYEMPWMIENETQKKLIIEETIEKLGIKGEDPVQFEGNIFVNTLYSSQFSPLDNNTIEETINAFKRIISSWQRSSKNFTSENINYLHYYDMTVAFPTESGLPFIYTLTVPKLLRINIGGGHKGSKTEHFKELTAAGYIMVHEKVQSRIGFVTPFEHRHYVAGIDTNTRLVTPLGLSISVNTTEENKKFKLTLQPSKYIRYGTGHSTVHFSVVPYTARNNILDLEHDFSKQDNDTLPVHTKEPHEIHFYISNWMFVAKSDLIDSKASEKQGMEAIKETVNLFCNSRGAYYRRFDGLMYFGEVRIRASYDFAKLDSDSSEATIPTIVNKEPDSEERKKQFLKEVGKNMNSAYGYVFDMSIDQGFDVQVFTLAYSYSQIDHKSQALFYWNVQSVDDPKIYAELGAIGYVKSKSISLNPEKALEQIPNDEFKAEIRLGNNFNEEMIKLEGNWTRTDDVKDMAMKSEIVKKCRQDMKQGNILLPACQKANKLINQKDLLMMSIDTTSDILYASANRGILWIQSLISENYVETMNLRSSSKNTIDMEIKMLPDNDDAKISLRTSQADVSFSLKDIIGNDSNVSMKDTFKEQLDDESVCVLDKTHAVTFDGKVYPLKLGKCWHVMMTIYPKRDPNNFEKTLSIPSDMRAIVMAQEMDDGSKQIKMILGDQEVHLQKSGDCLEASVDGETANFSDHKSHQEKDFEIYGSNETITVFSPTYEITVEYDGEHILLMISDNYLNAVRGLCGNYDTQPNNDFIIPENCILTKAEEFAATYAMTQESCQGPAPENKRKAEQSTCMSRSYRPSDVISDREAGRSSTKNRGWGYH.

The signal sequence occupies residues 1 to 18 (MWYLAFLLIIGAYAADHA). The 772-residue stretch at 19-790 (WETGNEYHYL…SQDTTVPKSS (772 aa)) folds into the Vitellogenin domain. A disulfide bond links Cys-172 and Cys-211. The span at 322–334 (LRQPSVSLNSMEA) shows a compositional bias: polar residues. A disordered region spans residues 322–372 (LRQPSVSLNSMEARSSENSNEENRSDDDRSNFLSNSGEEREYLQSKPTLNE). The span at 342-351 (EENRSDDDRS) shows a compositional bias: basic and acidic residues. Asn-344, Asn-549, Asn-566, Asn-831, Asn-875, Asn-898, Asn-1001, Asn-1053, Asn-1268, Asn-1393, Asn-1396, Asn-1505, and Asn-1523 each carry an N-linked (GlcNAc...) asparagine glycan. The region spanning 1410–1597 (ESVCVLDKTH…TYAMTQESCQ (188 aa)) is the VWFD domain. Residues Cys-1435 and Cys-1596 are joined by a disulfide bond. The segment at 1594–1641 (ESCQGPAPENKRKAEQSTCMSRSYRPSDVISDREAGRSSTKNRGWGYH) is disordered.

In terms of tissue distribution, hemolymph.

It is found in the secreted. In terms of biological role, precursor of the egg-yolk proteins that are sources of nutrients during embryonic development. This chain is Vitellogenin-1, found in Solenopsis invicta (Red imported fire ant).